Consider the following 329-residue polypeptide: MGSLGEEPQVAEDCMGLLQLLSNGTVLRSESIDLITQQIPFKNNQTVLFKDSIYHKPNNLHLRLYKPISASNRTALPVVVFFHGGGFCFGSRSWPHFHNFCLTLASSLNALVVSPDYRLAPEHRLPAAFEDAEAVLTWLWDQAVSDGVNHWFEDGTDVDFDRVFVVGDSSGGNIAHQLAVRFGSGSIELTPVRVRGYVLMGPFFGGEERTNSENGPSEALLSLDLLDKFWRLSLPNGATRDHHMANPFGPTSPTLESISLEPMLVIVGGSELLRDRAKEYAYKLKKMGGKRVDYIEFENKEHGFYSNYPSSEAAEQVLRIIGDFMNNLS.

The Involved in the stabilization of the negatively charged intermediate by the formation of the oxyanion hole motif lies at 83-85 (HGG). The (-)-2'-epi-GR24 site is built by G85, G86, S169, and S170. Catalysis depends on S169, which acts as the Nucleophile. Residues E271 and H302 contribute to the active site.

It belongs to the 'GDXG' lipolytic enzyme family. Expressed in axillary buds, leaves, stems, hypocotyls, flowers, siliques, and vasculatures of shoots and roots.

It is found in the nucleus. The protein localises to the cytoplasm. Its subcellular location is the cytosol. The enzyme catalyses (-)-2'-epi-GR24 + H2O = (-)-2'-epi-GR24 ABC-rings + 5-hydroxy-3-methylfuran-2(5H)-one. It catalyses the reaction 5-deoxystrigol + H2O = 5-deoxystrigol ABC-rings + 5-hydroxy-3-methylfuran-2(5H)-one. The catalysed reaction is orobanchol + H2O = orobanchol ABC-rings + 5-hydroxy-3-methylfuran-2(5H)-one. Binds to strigolactones (SLs) such as (-)-2'-epi-GR24(4DO), 5-deoxystrigol (5DS) and orobanchol, and catalyzes their hydrolysis; SL are phytohormones controlling shoot branching and communications between plants and microorganisms. Promotes shoot branching by dampening SL-inhibited axillary bud outgrowth. This Arabidopsis thaliana (Mouse-ear cress) protein is Strigolactones hydrolase CXE15.